The primary structure comprises 203 residues: Urease accessory protein UreG (203 aa).

14–21 is a GTP binding site; it reads GPVGSGKT.

It belongs to the SIMIBI class G3E GTPase family. UreG subfamily. Homodimer. UreD, UreF and UreG form a complex that acts as a GTP-hydrolysis-dependent molecular chaperone, activating the urease apoprotein by helping to assemble the nickel containing metallocenter of UreC. The UreE protein probably delivers the nickel.

It localises to the cytoplasm. In terms of biological role, facilitates the functional incorporation of the urease nickel metallocenter. This process requires GTP hydrolysis, probably effectuated by UreG. This Rhizobium etli (strain CIAT 652) protein is Urease accessory protein UreG.